A 521-amino-acid polypeptide reads, in one-letter code: GMP synthase [glutamine-hydrolyzing] (521 aa).

A Glutamine amidotransferase type-1 domain is found at 8 to 203 (KILILDFGAQ…VVDVCGCQTL (196 aa)). C85 serves as the catalytic Nucleophile. Residues H177 and E179 contribute to the active site. The region spanning 204–396 (WTAANIIDDQ…LGLPRTMVYR (193 aa)) is the GMPS ATP-PPase domain. 231-237 (SGGVDSS) contacts ATP.

As to quaternary structure, homodimer.

It carries out the reaction XMP + L-glutamine + ATP + H2O = GMP + L-glutamate + AMP + diphosphate + 2 H(+). Its pathway is purine metabolism; GMP biosynthesis; GMP from XMP (L-Gln route): step 1/1. In terms of biological role, catalyzes the synthesis of GMP from XMP. In Stenotrophomonas maltophilia (strain R551-3), this protein is GMP synthase [glutamine-hydrolyzing].